The following is a 101-amino-acid chain: STAS-domain containing protein PA14_20770 (101 aa).

One can recognise an STAS domain in the interval 14 to 101 (LTIQIQGRFD…SNFEQLFKIS (88 aa)).

In terms of processing, phosphorylated on a serine residue, possibly on Ser-56.

Its subcellular location is the secreted. This Pseudomonas aeruginosa (strain UCBPP-PA14) protein is STAS-domain containing protein PA14_20770.